The chain runs to 250 residues: 3-deoxy-manno-octulosonate cytidylyltransferase (250 aa).

Belongs to the KdsB family.

The protein resides in the cytoplasm. The enzyme catalyses 3-deoxy-alpha-D-manno-oct-2-ulosonate + CTP = CMP-3-deoxy-beta-D-manno-octulosonate + diphosphate. Its pathway is nucleotide-sugar biosynthesis; CMP-3-deoxy-D-manno-octulosonate biosynthesis; CMP-3-deoxy-D-manno-octulosonate from 3-deoxy-D-manno-octulosonate and CTP: step 1/1. It functions in the pathway bacterial outer membrane biogenesis; lipopolysaccharide biosynthesis. Its function is as follows. Activates KDO (a required 8-carbon sugar) for incorporation into bacterial lipopolysaccharide in Gram-negative bacteria. The chain is 3-deoxy-manno-octulosonate cytidylyltransferase from Legionella pneumophila (strain Paris).